The chain runs to 407 residues: MASSSVFAGLAQAPEDPILGVTVAYNKDPSPVKVNLGVGAYRTEEGKPLVLNVVRRAEQMLINNPSRVKEYLPITGLADFNKLSAKLIFGADSPAIQENRVATVQCLSGTGSLRVGGEFLARHYHERTIYIPQPTWGNHPKVFTLAGLTVRSYRYYDPATRGLDFQGLLEDLGSAPSGAIVLLHACAHNPTGVDPTLDQWEQIRQLMRSKALLPFFDSAYQGFASGSLDQDAQSVRMFVADGGELLMAQSYAKNMGLYGERVGALSIVCGSADVAVRVESQLKLVIRPMYSNPPIHGASIVATILKDSAMFNEWTVELKGMADRIISMRQQLFDALKTRETPGDWSHIIKQIGMFTFTGLNSDQVAFMRQEYHIYMTSDGRISMAGLSGRTIPHLADAIHAAVTKLK.

Positions 39, 136, and 189 each coordinate L-aspartate. Residue Lys-253 is modified to N6-(pyridoxal phosphate)lysine. Arg-381 provides a ligand contact to L-aspartate.

This sequence belongs to the class-I pyridoxal-phosphate-dependent aminotransferase family. Homodimer. Pyridoxal 5'-phosphate is required as a cofactor.

The protein resides in the cytoplasm. The catalysed reaction is L-aspartate + 2-oxoglutarate = oxaloacetate + L-glutamate. In terms of biological role, important for the metabolism of amino acids and Krebs-cycle related organic acids. In plants, it is involved in nitrogen metabolism and in aspects of carbon and energy metabolism. This is Aspartate aminotransferase, cytoplasmic from Oryza sativa subsp. japonica (Rice).